We begin with the raw amino-acid sequence, 152 residues long: MFP1 attachment factor 1 (152 aa).

Disordered stretches follow at residues 1–33 (MAEIDSAQSQETVTQETQNKPMTTSFSIWPPTQ) and 107–152 (DTVK…ETEP). The interval 12–115 (TVTQETQNKP…IDTVKSRSAP (104 aa)) is WPP. The segment covering 134–152 (EPSSASGLTGEVSSVETEP) has biased composition (polar residues).

Interacts with WAP through its WPP domain. Binds to MFP1 and FPP proteins. In terms of tissue distribution, expressed in young tomato leaves, young fruits, and flowers (at protein level).

The protein localises to the nucleus envelope. The protein resides in the cytoplasm. It localises to the golgi apparatus. Its subcellular location is the nucleus. It is found in the nucleus matrix. In Solanum lycopersicum (Tomato), this protein is MFP1 attachment factor 1 (MAF1).